We begin with the raw amino-acid sequence, 140 residues long: Transcription antitermination protein NusB (140 aa).

It belongs to the NusB family.

Functionally, involved in transcription antitermination. Required for transcription of ribosomal RNA (rRNA) genes. Binds specifically to the boxA antiterminator sequence of the ribosomal RNA (rrn) operons. This chain is Transcription antitermination protein NusB, found in Pseudoalteromonas atlantica (strain T6c / ATCC BAA-1087).